Consider the following 200-residue polypeptide: Protein GrpE (200 aa).

The span at 1-10 (MQEKDSKDVT) shows a compositional bias: basic and acidic residues. Residues 1 to 57 (MQEKDSKDVTMEDEETIASQEEIEVEGNSEESSKEEESNNSEISDENLSEENLKLKD) are disordered. Acidic residues predominate over residues 11 to 29 (MEDEETIASQEEIEVEGNS).

It belongs to the GrpE family. As to quaternary structure, homodimer.

It is found in the cytoplasm. Its function is as follows. Participates actively in the response to hyperosmotic and heat shock by preventing the aggregation of stress-denatured proteins, in association with DnaK and GrpE. It is the nucleotide exchange factor for DnaK and may function as a thermosensor. Unfolded proteins bind initially to DnaJ; upon interaction with the DnaJ-bound protein, DnaK hydrolyzes its bound ATP, resulting in the formation of a stable complex. GrpE releases ADP from DnaK; ATP binding to DnaK triggers the release of the substrate protein, thus completing the reaction cycle. Several rounds of ATP-dependent interactions between DnaJ, DnaK and GrpE are required for fully efficient folding. The protein is Protein GrpE of Clostridium acetobutylicum (strain ATCC 824 / DSM 792 / JCM 1419 / IAM 19013 / LMG 5710 / NBRC 13948 / NRRL B-527 / VKM B-1787 / 2291 / W).